Reading from the N-terminus, the 24-residue chain is Fraternine (24 aa).

Cysteine 11 and cysteine 24 are disulfide-bonded. Cysteine 24 carries the post-translational modification Cysteine amide.

As to expression, expressed by the venom gland.

The protein localises to the secreted. Its function is as follows. Wasp venom peptide that acts as a potent mast cell degranulating peptide without hemolytic activity. Shows neuroprotective effect, since it prevents the death of dopaminergic neurons of the brain substantia nigra region and recovers motor deficit in a 6-hydroxydopamine (6-OHDA)-induced murine model of Parkinson disease. The chain is Fraternine from Parachartergus fraternus (Artistic wasp).